The sequence spans 263 residues: Single-stranded DNA-binding protein WHY1, chloroplastic (263 aa).

The transit peptide at 1–47 (MSQLLSTPLMAVNSNPRFLSSSSVLVTGGFAVKRHGFALKPTTKTVK) directs the protein to the chloroplast. The tract at residues 89–94 (KGKAAL) is required for ssDNA binding. The Nuclear localization signal signature appears at 167 to 180 (KGKSDEGKVRKVLK).

Belongs to the Whirly family. As to quaternary structure, homotetramer.

The protein resides in the plastid. It is found in the chloroplast. It localises to the nucleus. In terms of biological role, single-stranded DNA-binding protein that functions in both chloroplasts and nucleus. In chloroplasts, maintains plastid genome stability by preventing break-induced and short homology-dependent illegitimate recombinations. In nucleus, modulates telomere length homeostasis by inhibiting the action of the telomerase at the extreme termini of chromosomes. Is recruited to a distal element upstream of the kinesin KP1 to mediate the transcriptional repression of KP1. Is required for full salicylic acid-dependent plant disease resistance responses. Can bind double-stranded DNA in vivo. The chain is Single-stranded DNA-binding protein WHY1, chloroplastic (WHY1) from Arabidopsis thaliana (Mouse-ear cress).